A 239-amino-acid chain; its full sequence is Ubiquinone biosynthesis O-methyltransferase (239 aa).

Residues arginine 44, glycine 63, aspartate 84, and methionine 128 each coordinate S-adenosyl-L-methionine.

It belongs to the methyltransferase superfamily. UbiG/COQ3 family.

The catalysed reaction is a 3-demethylubiquinol + S-adenosyl-L-methionine = a ubiquinol + S-adenosyl-L-homocysteine + H(+). It catalyses the reaction a 3-(all-trans-polyprenyl)benzene-1,2-diol + S-adenosyl-L-methionine = a 2-methoxy-6-(all-trans-polyprenyl)phenol + S-adenosyl-L-homocysteine + H(+). It participates in cofactor biosynthesis; ubiquinone biosynthesis. Functionally, O-methyltransferase that catalyzes the 2 O-methylation steps in the ubiquinone biosynthetic pathway. The chain is Ubiquinone biosynthesis O-methyltransferase from Xanthomonas oryzae pv. oryzae (strain MAFF 311018).